The sequence spans 56 residues: Large ribosomal subunit protein bL32 (56 aa).

Over residues 1-16 (MAVQKSKKSRSRRDMR) the composition is skewed to basic residues. Residues 1-56 (MAVQKSKKSRSRRDMRRSHDAIDGPTLSVDSTTGETHRRHHVTADGYYKGRKVVNK) are disordered.

Belongs to the bacterial ribosomal protein bL32 family.

The protein is Large ribosomal subunit protein bL32 of Idiomarina loihiensis (strain ATCC BAA-735 / DSM 15497 / L2-TR).